A 778-amino-acid polypeptide reads, in one-letter code: Zinc finger protein 749 (778 aa).

In terms of domain architecture, KRAB spans 8 to 101; it reads MVFEDVAIYF…ILKDILHLAE (94 aa). The segment at 152–174 adopts a C2H2-type 1; degenerate zinc-finger fold; sequence FTCTQGGKDFTASSDLLQQQVLN. A C2H2-type 2; degenerate zinc finger spans residues 196 to 218; it reads FNSSQGGKDFCHQHGLFEHQKTH. The C2H2-type 3; degenerate zinc-finger motif lies at 224-246; that stretch reads YEFSECGELFRYNSNLIKYQQNH. Residues 252–274 form a C2H2-type 4; degenerate zinc finger; the sequence is YEGTEYGKTFIRKSNLVQHQKIH. C2H2-type zinc fingers lie at residues 298-320, 326-348, 354-376, 382-404, 410-432, and 438-460; these read YECT…QKTH, YECN…QKVH, YECS…QRVH, FECS…QRVH, YKCS…LKIH, and YECT…QKIH. Lys-466 carries the post-translational modification N6-acetyllysine. C2H2-type zinc fingers lie at residues 483 to 505 and 511 to 533; these read YTCS…QKIH and YECT…EKIH. An N6-acetyllysine modification is found at Lys-539. A C2H2-type 13; degenerate zinc finger spans residues 556–578; the sequence is YVCSECGKAFLTQAHLDGHQKIQ. 3 C2H2-type zinc fingers span residues 584–606, 612–634, and 640–662; these read YECN…QRIH, YKCS…QKVH, and YECS…QRVH. Residues 668–690 form a C2H2-type 17; atypical zinc finger; sequence YECSNCGKFLRYRSTFIKHHKVC. A C2H2-type 18 zinc finger spans residues 696–718; that stretch reads HECSKCRELFRTKSSLIIHQQSH. Residues 751–773 form a C2H2-type 19; degenerate zinc finger; sequence YECGESSKVFKYNSSLIKHQIIH. Glycyl lysine isopeptide (Lys-Gly) (interchain with G-Cter in SUMO2) cross-links involve residues Lys-761 and Lys-768.

Belongs to the krueppel C2H2-type zinc-finger protein family.

Its subcellular location is the nucleus. In terms of biological role, may be involved in transcriptional regulation. This chain is Zinc finger protein 749 (ZNF749), found in Homo sapiens (Human).